We begin with the raw amino-acid sequence, 737 residues long: Transcription activator MSS11 (737 aa).

The tract at residues 1–23 (MDNTTNINTNERSSNTDFSSAPN) is disordered. One can recognise a LisH domain in the interval 51-83 (SKQLLYAHIYNYLIKNNYWNSAAKFLSEADLPL). 4 disordered regions span residues 191 to 220 (TQNS…TNRN), 268 to 347 (LQSP…PTNQ), 413 to 439 (GNQN…NANG), and 572 to 660 (KTNT…TKES). Polar residues predominate over residues 207–220 (DGSNFNLNDPTNRN). A compositionally biased stretch (low complexity) spans 269–314 (QSPAQPQQSSQQQIQQPQRQPQHQQQQQQQQQQQQQQQQQQQQQQQ). Polar residues-rich tracts occupy residues 330 to 347 (SENS…PTNQ), 421 to 439 (TRNN…NANG), and 572 to 585 (KTNT…STSV). Low complexity predominate over residues 590–643 (NNNNNNNNNNNNNNNSNNSNNNNNNNNSNNTPTVSQPSSKRTSSSSTTPNITTT). Over residues 646–655 (PKRKQRVGKT) the composition is skewed to basic residues.

The protein belongs to the MSS11 family. As to quaternary structure, interacts with FLO8, STE12 and TEC1.

The protein resides in the cytoplasm. It localises to the nucleus. Its function is as follows. Transcription factor that regulates pseudohyphal differentiation, invasive growth, floculation, adhesion and starch metabolism in response to nutrient availability. This is Transcription activator MSS11 (MSS11) from Saccharomyces cerevisiae (strain YJM789) (Baker's yeast).